The primary structure comprises 432 residues: Peptidase B (432 aa).

Mn(2+) contacts are provided by K196 and D201. K208 is a catalytic residue. Mn(2+) is bound by residues D219, D278, and E280. R282 is an active-site residue.

It belongs to the peptidase M17 family. Homohexamer. Requires Mn(2+) as cofactor.

The protein localises to the cytoplasm. It carries out the reaction Release of an N-terminal amino acid, Xaa, from a peptide or arylamide. Xaa is preferably Glu or Asp but may be other amino acids, including Leu, Met, His, Cys and Gln.. Its function is as follows. Probably plays an important role in intracellular peptide degradation. This chain is Peptidase B, found in Yersinia pseudotuberculosis serotype IB (strain PB1/+).